The sequence spans 192 residues: Holliday junction branch migration complex subunit RuvA (192 aa).

The domain I stretch occupies residues 1 to 64 (MIGRLTGILA…EDGHYLYGFL (64 aa)). Positions 65–143 (TEAERFAFRQ…DATGVSLHPA (79 aa)) are domain II. Residues 144 to 149 (VDDSKQ) are flexible linker. A domain III region spans residues 149–192 (QDISNALLALGYNEKEAASAMKQLPADVSTSDGIRAALKLLSKV).

This sequence belongs to the RuvA family. In terms of assembly, homotetramer. Forms an RuvA(8)-RuvB(12)-Holliday junction (HJ) complex. HJ DNA is sandwiched between 2 RuvA tetramers; dsDNA enters through RuvA and exits via RuvB. An RuvB hexamer assembles on each DNA strand where it exits the tetramer. Each RuvB hexamer is contacted by two RuvA subunits (via domain III) on 2 adjacent RuvB subunits; this complex drives branch migration. In the full resolvosome a probable DNA-RuvA(4)-RuvB(12)-RuvC(2) complex forms which resolves the HJ.

Its subcellular location is the cytoplasm. Functionally, the RuvA-RuvB-RuvC complex processes Holliday junction (HJ) DNA during genetic recombination and DNA repair, while the RuvA-RuvB complex plays an important role in the rescue of blocked DNA replication forks via replication fork reversal (RFR). RuvA specifically binds to HJ cruciform DNA, conferring on it an open structure. The RuvB hexamer acts as an ATP-dependent pump, pulling dsDNA into and through the RuvAB complex. HJ branch migration allows RuvC to scan DNA until it finds its consensus sequence, where it cleaves and resolves the cruciform DNA. The sequence is that of Holliday junction branch migration complex subunit RuvA from Dechloromonas aromatica (strain RCB).